A 458-amino-acid chain; its full sequence is RuvB-like helicase 1 (458 aa).

An ATP-binding site is contributed by 71–78 (GGPGTGKT).

Belongs to the RuvB family. May form heterododecamers with hel-2/rvb2. Component of the SWR1 chromatin remodeling complex, the INO80 chromatin remodeling complex, and of the R2TP complex.

It is found in the nucleus. The catalysed reaction is ATP + H2O = ADP + phosphate + H(+). DNA helicase which participates in several chromatin remodeling complexes, including the SWR1 and the INO80 complexes. The SWR1 complex mediates the ATP-dependent exchange of histone H2A for the H2A variant H2A.Z leading to transcriptional regulation of selected genes by chromatin remodeling. The INO80 complex remodels chromatin by shifting nucleosomes and is involved in DNA repair. Also involved in pre-rRNA processing. This chain is RuvB-like helicase 1 (hel-1), found in Neurospora crassa (strain ATCC 24698 / 74-OR23-1A / CBS 708.71 / DSM 1257 / FGSC 987).